Reading from the N-terminus, the 357-residue chain is Uroporphyrinogen decarboxylase (357 aa).

Residues 30–34 (RQAGR), aspartate 79, tyrosine 154, serine 209, and histidine 336 contribute to the substrate site.

This sequence belongs to the uroporphyrinogen decarboxylase family. As to quaternary structure, homodimer.

Its subcellular location is the cytoplasm. The catalysed reaction is uroporphyrinogen III + 4 H(+) = coproporphyrinogen III + 4 CO2. It participates in porphyrin-containing compound metabolism; protoporphyrin-IX biosynthesis; coproporphyrinogen-III from 5-aminolevulinate: step 4/4. Its function is as follows. Catalyzes the decarboxylation of four acetate groups of uroporphyrinogen-III to yield coproporphyrinogen-III. This is Uroporphyrinogen decarboxylase from Mycobacterium bovis (strain ATCC BAA-935 / AF2122/97).